Reading from the N-terminus, the 189-residue chain is MQALLAAPLAKAEELNPLLPHAIEIVLSLVVFGLLLFAVWKFVTPRFEQIYTERTQAIEGGLAAAETKQAEADAKLADLEQQLSEARHEAARIREEAREQGAQIIAEMREQAQADAARIVEHGKTQIEAERQQAVTSLRAEVGTLATSLAGRIVGESLEDDDRSARVVERFLADLETIEASQAAGGGES.

The helical transmembrane segment at 23-43 (IEIVLSLVVFGLLLFAVWKFV) threads the bilayer.

Belongs to the ATPase B chain family. In terms of assembly, F-type ATPases have 2 components, F(1) - the catalytic core - and F(0) - the membrane proton channel. F(1) has five subunits: alpha(3), beta(3), gamma(1), delta(1), epsilon(1). F(0) has three main subunits: a(1), b(2) and c(10-14). The alpha and beta chains form an alternating ring which encloses part of the gamma chain. F(1) is attached to F(0) by a central stalk formed by the gamma and epsilon chains, while a peripheral stalk is formed by the delta and b chains.

The protein localises to the cell membrane. Its function is as follows. F(1)F(0) ATP synthase produces ATP from ADP in the presence of a proton or sodium gradient. F-type ATPases consist of two structural domains, F(1) containing the extramembraneous catalytic core and F(0) containing the membrane proton channel, linked together by a central stalk and a peripheral stalk. During catalysis, ATP synthesis in the catalytic domain of F(1) is coupled via a rotary mechanism of the central stalk subunits to proton translocation. Functionally, component of the F(0) channel, it forms part of the peripheral stalk, linking F(1) to F(0). This is ATP synthase subunit b from Nocardioides sp. (strain ATCC BAA-499 / JS614).